A 405-amino-acid chain; its full sequence is S-adenosylmethionine synthase (405 aa).

139–144 (GQGSVD) contributes to the ATP binding site.

It belongs to the AdoMet synthase 2 family. The cofactor is Mg(2+).

It catalyses the reaction L-methionine + ATP + H2O = S-adenosyl-L-methionine + phosphate + diphosphate. It participates in amino-acid biosynthesis; S-adenosyl-L-methionine biosynthesis; S-adenosyl-L-methionine from L-methionine: step 1/1. Catalyzes the formation of S-adenosylmethionine from methionine and ATP. The chain is S-adenosylmethionine synthase from Thermococcus gammatolerans (strain DSM 15229 / JCM 11827 / EJ3).